The chain runs to 433 residues: 3-phosphoshikimate 1-carboxyvinyltransferase (433 aa).

Residues Lys-21, Ser-22, and Arg-26 each contribute to the 3-phosphoshikimate site. Lys-21 is a binding site for phosphoenolpyruvate. The phosphoenolpyruvate site is built by Gly-96 and Arg-124. Ser-167, Ser-168, Gln-169, Ser-195, Asp-310, and Lys-337 together coordinate 3-phosphoshikimate. Residue Gln-169 participates in phosphoenolpyruvate binding. Catalysis depends on Asp-310, which acts as the Proton acceptor. Residues Arg-341, Arg-384, and Lys-410 each contribute to the phosphoenolpyruvate site.

The protein belongs to the EPSP synthase family. As to quaternary structure, monomer.

The protein resides in the cytoplasm. It carries out the reaction 3-phosphoshikimate + phosphoenolpyruvate = 5-O-(1-carboxyvinyl)-3-phosphoshikimate + phosphate. The protein operates within metabolic intermediate biosynthesis; chorismate biosynthesis; chorismate from D-erythrose 4-phosphate and phosphoenolpyruvate: step 6/7. In terms of biological role, catalyzes the transfer of the enolpyruvyl moiety of phosphoenolpyruvate (PEP) to the 5-hydroxyl of shikimate-3-phosphate (S3P) to produce enolpyruvyl shikimate-3-phosphate and inorganic phosphate. This Clostridium botulinum (strain Eklund 17B / Type B) protein is 3-phosphoshikimate 1-carboxyvinyltransferase.